Consider the following 1356-residue polypeptide: Collagen alpha-2(I) chain (1356 aa).

The N-terminal stretch at 1–22 is a signal peptide; that stretch reads MLSFVDNRILLLLAVTSLLASC. The segment at 22–1112 is disordered; the sequence is CQSGGLKGPR…DQSGGYDEYR (1091 aa). A pyrrolidone carboxylic acid mark is found at Gln23 and Gln73. Positions 23–72 are cleaved as a propeptide — N-terminal propeptide; the sequence is QSGGLKGPRGAKGPRGDRGPQGPNGRDGKAGLPGIAGPPGPPGLGGNFAA. Residues 76-88 are compositionally biased toward gly residues; it reads GGKGSDPGPGPMG. Lys78 carries the post-translational modification Allysine. Residue Lys171 is modified to 5-hydroxylysine; alternate. O-linked (Gal...) hydroxylysine; alternate glycosylation occurs at Lys171. The span at 219 to 248 shows a compositional bias: low complexity; the sequence is AGPAGPAGARGADGSTGPAGPAGPLGAAGP. Residues 259–280 are compositionally biased toward gly residues; sequence GEIGGAGSNGPSGPQGGRGEPG. A compositionally biased stretch (low complexity) spans 281–315; sequence INGAVGPVGPVGNPGNNGINGAKGAAGLPGVAGAP. The segment covering 317–327 has biased composition (pro residues); it reads FPGPRGGPGPQ. 4 stretches are compositionally biased toward gly residues: residues 334–343, 391–412, 418–427, and 448–457; these read GARGLGGDPG, GARG…GPIG, GATGPGGIRG, and GNSGQGGPPG. Over residues 479–489 the composition is skewed to low complexity; the sequence is PRGQPGNIGFP. Residues 511–520 are compositionally biased toward gly residues; sequence GLRGGPGADG. Low complexity-rich tracts occupy residues 521 to 564 and 587 to 603; these read NNGA…AGKA and NSGP…IGAR. Composition is skewed to gly residues over residues 610–619 and 628–646; these read GPDGGKGEPG and GHQG…GTPG. Residues 648 to 659 are compositionally biased toward basic and acidic residues; that stretch reads KGEKGEGGHRGL. The span at 716 to 731 shows a compositional bias: low complexity; the sequence is LPGFAGPPGSDGQSGP. A compositionally biased stretch (gly residues) spans 736 to 745; that stretch reads GPAGGKGDVG. Low complexity-rich tracts occupy residues 746–764 and 776–786; these read PAGP…ASGP and PSGLTGFPGAA. Residues 787 to 796 are compositionally biased toward gly residues; the sequence is GRVGGPGPAG. A compositionally biased stretch (low complexity) spans 797–809; that stretch reads IAGPPGSAGPAGK. Over residues 817–826 the composition is skewed to gly residues; sequence GDPGPGGPQG. Residues 827–858 are compositionally biased toward low complexity; it reads EQGVVGPAGISGDKGPSGESGPPGAPGTAGPQ. Over residues 877–886 the composition is skewed to gly residues; sequence GLPGGPGAVG. The segment covering 888 to 903 has biased composition (low complexity); the sequence is PGRLGPAGASGPRGPA. Gly residues predominate over residues 976 to 985; the sequence is GPTGNGGPVG. Positions 999-1013 are enriched in basic and acidic residues; sequence RGEKGGAGEKGDRGM. The segment covering 1083 to 1095 has biased composition (pro residues); sequence AGPPGSPGLPGPA. Residues 1114–1356 constitute a propeptide, C-terminal propeptide; that stretch reads DQPSFRAKDY…GLDIGPVCFK (243 aa). The Fibrillar collagen NC1 domain maps to 1123–1356; sequence YEVDATIKSL…GLDIGPVCFK (234 aa). 3 disulfide bridges follow: Cys1153–Cys1185, Cys1193–Cys1354, and Cys1262–Cys1307. Residues Asp1171, Asn1173, Gln1174, Cys1176, and Asp1179 each contribute to the Ca(2+) site. A glycan (N-linked (GlcNAc...) asparagine) is linked at Asn1257.

This sequence belongs to the fibrillar collagen family. As to quaternary structure, trimers of one alpha 2(I) and two alpha 1(I) chains. Prolines at the third position of the tripeptide repeating unit (G-X-Y) are hydroxylated in some or all of the chains. As to expression, forms the fibrils of tendon, ligaments and bones. In bones the fibrils are mineralized with calcium hydroxyapatite.

The protein resides in the secreted. It is found in the extracellular space. The protein localises to the extracellular matrix. In terms of biological role, type I collagen is a member of group I collagen (fibrillar forming collagen). The sequence is that of Collagen alpha-2(I) chain (col1a2) from Oncorhynchus mykiss (Rainbow trout).